The chain runs to 398 residues: 1-deoxy-D-xylulose 5-phosphate reductoisomerase (398 aa).

Positions 11, 12, 13, 14, and 125 each coordinate NADPH. 1-deoxy-D-xylulose 5-phosphate is bound at residue Lys-126. Position 127 (Glu-127) interacts with NADPH. Asp-151 is a Mn(2+) binding site. Residues Ser-152, Glu-153, Ser-186, and His-209 each coordinate 1-deoxy-D-xylulose 5-phosphate. Glu-153 contributes to the Mn(2+) binding site. Residue Gly-215 coordinates NADPH. 1-deoxy-D-xylulose 5-phosphate-binding residues include Ser-222, Asn-227, Lys-228, and Glu-231. Glu-231 contacts Mn(2+).

Belongs to the DXR family. The cofactor is Mg(2+). Mn(2+) is required as a cofactor.

It catalyses the reaction 2-C-methyl-D-erythritol 4-phosphate + NADP(+) = 1-deoxy-D-xylulose 5-phosphate + NADPH + H(+). Its pathway is isoprenoid biosynthesis; isopentenyl diphosphate biosynthesis via DXP pathway; isopentenyl diphosphate from 1-deoxy-D-xylulose 5-phosphate: step 1/6. Its function is as follows. Catalyzes the NADPH-dependent rearrangement and reduction of 1-deoxy-D-xylulose-5-phosphate (DXP) to 2-C-methyl-D-erythritol 4-phosphate (MEP). The sequence is that of 1-deoxy-D-xylulose 5-phosphate reductoisomerase from Acinetobacter baumannii (strain AB307-0294).